A 501-amino-acid chain; its full sequence is Ribose import ATP-binding protein RbsA (501 aa).

2 ABC transporter domains span residues 6 to 242 (LQLS…VGRK) and 253 to 495 (VHGQ…VGKK). 38–45 (GENGAGKS) is an ATP binding site.

The protein belongs to the ABC transporter superfamily. Ribose importer (TC 3.A.1.2.1) family. As to quaternary structure, the complex is composed of an ATP-binding protein (RbsA), two transmembrane proteins (RbsC) and a solute-binding protein (RbsB).

The protein localises to the cell inner membrane. It catalyses the reaction D-ribose(out) + ATP + H2O = D-ribose(in) + ADP + phosphate + H(+). In terms of biological role, part of the ABC transporter complex RbsABC involved in ribose import. Responsible for energy coupling to the transport system. In Vibrio vulnificus (strain CMCP6), this protein is Ribose import ATP-binding protein RbsA.